The chain runs to 404 residues: Clavilactone A biosynthesis cluster protein Y (404 aa).

Its function is as follows. Part of the gene cluster that mediates the biosynthesis of clavilactone A, a meroterpenoid that features a unique benzo-fused ten-membered carbocyclic ring unit with an alpha,beta-epoxy-gamma-lactone moiety, forming an intriguing 10/5/3 tricyclic nested skeleton. ClaR, ClaS and ClaT are sufficient to produce clavilactone A and the function of claY, if any, has still to be identified. The biosynthesis begins with the prenyltransferase claS that transfers geranyl pyrophosphate (GPP) to hydroquinone to produces geranylhydroquinon. The cytochrome P450 monooxygenase claR then catalyzes the diradical coupling reaction between the intramolecular hydroquinone and allyl moieties to form the benzo-fused ten-membered carbocyclic ring unit of wigantol. Finally the cytochrome P450 monooxygenase claT exquisitely and stereoselectively assembles the alpha,beta-epoxy-gamma-lactone moiety, producing clavilactone A via arnebinol A. This chain is Clavilactone A biosynthesis cluster protein Y, found in Ampulloclitocybe clavipes (Club foot).